The sequence spans 688 residues: Translation initiation factor IF-2 (688 aa).

Positions 54–95 (KEKSEKTKEEDDEIETTAKNPIKESTNNKKPNKRDDKNEKVN) are disordered. Residues 86–95 (KRDDKNEKVN) show a composition bias toward basic and acidic residues. Residues 187 to 354 (KRSPIITVMG…MILLSSEILE (168 aa)) enclose the tr-type G domain. Residues 196–203 (GHVDHGKT) form a G1 region. A GTP-binding site is contributed by 196–203 (GHVDHGKT). Positions 221–225 (GITQH) are G2. Residues 242 to 245 (DTPG) are G3. GTP-binding positions include 242–246 (DTPGH) and 296–299 (NKID). Positions 296–299 (NKID) are G4. The segment at 332–334 (SAH) is G5.

This sequence belongs to the TRAFAC class translation factor GTPase superfamily. Classic translation factor GTPase family. IF-2 subfamily.

Its subcellular location is the cytoplasm. Its function is as follows. One of the essential components for the initiation of protein synthesis. Protects formylmethionyl-tRNA from spontaneous hydrolysis and promotes its binding to the 30S ribosomal subunits. Also involved in the hydrolysis of GTP during the formation of the 70S ribosomal complex. The polypeptide is Translation initiation factor IF-2 (Clostridium botulinum (strain Okra / Type B1)).